An 848-amino-acid polypeptide reads, in one-letter code: Probable disease resistance protein At5g43730 (848 aa).

A coiled-coil region spans residues 25 to 62 (SNYIHLMESNLDALQKTMEELKNGRDDLLARVSIEEDK). In terms of domain architecture, NB-ARC spans 137–439 (VAQKIIPKAE…CEGYINPNRY (303 aa)). ATP is bound at residue 179–186 (GMGGIGKT). 5 LRR repeats span residues 534 to 555 (NLST…FFLF), 558 to 580 (KLVV…ISNL), 582 to 604 (SLQY…KKLR), 605 to 627 (KLIY…ATTL), and 629 to 649 (NLQV…IMEE).

The protein belongs to the disease resistance NB-LRR family.

Its function is as follows. Probable disease resistance protein. This Arabidopsis thaliana (Mouse-ear cress) protein is Probable disease resistance protein At5g43730.